Here is a 372-residue protein sequence, read N- to C-terminus: Chaperone protein DnaJ (372 aa).

The J domain occupies aspartate 5–glycine 70. Residues glycine 134–glutamate 212 form a CR-type zinc finger. Zn(2+)-binding residues include cysteine 147, cysteine 150, cysteine 164, cysteine 167, cysteine 186, cysteine 189, cysteine 200, and cysteine 203. CXXCXGXG motif repeat units follow at residues cysteine 147 to glycine 154, cysteine 164 to glycine 171, cysteine 186 to glycine 193, and cysteine 200 to glycine 207.

It belongs to the DnaJ family. Homodimer. Zn(2+) serves as cofactor.

It localises to the cytoplasm. Functionally, participates actively in the response to hyperosmotic and heat shock by preventing the aggregation of stress-denatured proteins and by disaggregating proteins, also in an autonomous, DnaK-independent fashion. Unfolded proteins bind initially to DnaJ; upon interaction with the DnaJ-bound protein, DnaK hydrolyzes its bound ATP, resulting in the formation of a stable complex. GrpE releases ADP from DnaK; ATP binding to DnaK triggers the release of the substrate protein, thus completing the reaction cycle. Several rounds of ATP-dependent interactions between DnaJ, DnaK and GrpE are required for fully efficient folding. Also involved, together with DnaK and GrpE, in the DNA replication of plasmids through activation of initiation proteins. This Wolbachia pipientis wMel protein is Chaperone protein DnaJ.